The sequence spans 228 residues: MPHASQLSLQEAMGPTMEEVIFLHDHVLLLTCLMTMVITMFTLTATTTALTHNDPTEEVEQLEAAWTVAPIMILILTALPSVRSLYLMEEVFNPYLTIKATGHQWYWNYEYSDGVKISFDSYMIQTKDLQNGSPRLLEVDHRMVMPAGLQTRVVVTAEDVLHSWTIPSLGVKVDAVPGRLNQLPLATSRVGVFYGQCSEICGANHSFMPIAMEATPLHHFEQWLISEQ.

The Mitochondrial intermembrane segment spans residues 1–14 (MPHASQLSLQEAMG). Residues 15–45 (PTMEEVIFLHDHVLLLTCLMTMVITMFTLTA) traverse the membrane as a helical segment. Over 46–59 (TTTALTHNDPTEEV) the chain is Mitochondrial matrix. The helical transmembrane segment at 60–87 (EQLEAAWTVAPIMILILTALPSVRSLYL) threads the bilayer. Topologically, residues 88 to 228 (MEEVFNPYLT…HFEQWLISEQ (141 aa)) are mitochondrial intermembrane. Cu cation contacts are provided by histidine 162, cysteine 197, glutamate 199, cysteine 201, histidine 205, and methionine 208. Glutamate 199 lines the Mg(2+) pocket.

This sequence belongs to the cytochrome c oxidase subunit 2 family. In terms of assembly, component of the cytochrome c oxidase (complex IV, CIV), a multisubunit enzyme composed of 14 subunits. The complex is composed of a catalytic core of 3 subunits MT-CO1, MT-CO2 and MT-CO3, encoded in the mitochondrial DNA, and 11 supernumerary subunits COX4I, COX5A, COX5B, COX6A, COX6B, COX6C, COX7A, COX7B, COX7C, COX8 and NDUFA4, which are encoded in the nuclear genome. The complex exists as a monomer or a dimer and forms supercomplexes (SCs) in the inner mitochondrial membrane with NADH-ubiquinone oxidoreductase (complex I, CI) and ubiquinol-cytochrome c oxidoreductase (cytochrome b-c1 complex, complex III, CIII), resulting in different assemblies (supercomplex SCI(1)III(2)IV(1) and megacomplex MCI(2)III(2)IV(2)). Found in a complex with TMEM177, COA6, COX18, COX20, SCO1 and SCO2. Interacts with TMEM177 in a COX20-dependent manner. Interacts with COX20. Interacts with COX16. Cu cation is required as a cofactor.

It localises to the mitochondrion inner membrane. The catalysed reaction is 4 Fe(II)-[cytochrome c] + O2 + 8 H(+)(in) = 4 Fe(III)-[cytochrome c] + 2 H2O + 4 H(+)(out). Functionally, component of the cytochrome c oxidase, the last enzyme in the mitochondrial electron transport chain which drives oxidative phosphorylation. The respiratory chain contains 3 multisubunit complexes succinate dehydrogenase (complex II, CII), ubiquinol-cytochrome c oxidoreductase (cytochrome b-c1 complex, complex III, CIII) and cytochrome c oxidase (complex IV, CIV), that cooperate to transfer electrons derived from NADH and succinate to molecular oxygen, creating an electrochemical gradient over the inner membrane that drives transmembrane transport and the ATP synthase. Cytochrome c oxidase is the component of the respiratory chain that catalyzes the reduction of oxygen to water. Electrons originating from reduced cytochrome c in the intermembrane space (IMS) are transferred via the dinuclear copper A center (CU(A)) of subunit 2 and heme A of subunit 1 to the active site in subunit 1, a binuclear center (BNC) formed by heme A3 and copper B (CU(B)). The BNC reduces molecular oxygen to 2 water molecules using 4 electrons from cytochrome c in the IMS and 4 protons from the mitochondrial matrix. This Lycodon semicarinatus (Ryukyu odd-tooth snake) protein is Cytochrome c oxidase subunit 2 (MT-CO2).